The following is a 316-amino-acid chain: Ribosomal RNA small subunit methyltransferase H (316 aa).

Residues 35-37, Asp-55, Phe-84, Asp-105, and Gln-112 each bind S-adenosyl-L-methionine; that span reads AGH.

The protein belongs to the methyltransferase superfamily. RsmH family.

It is found in the cytoplasm. It carries out the reaction cytidine(1402) in 16S rRNA + S-adenosyl-L-methionine = N(4)-methylcytidine(1402) in 16S rRNA + S-adenosyl-L-homocysteine + H(+). Specifically methylates the N4 position of cytidine in position 1402 (C1402) of 16S rRNA. The sequence is that of Ribosomal RNA small subunit methyltransferase H from Streptococcus sanguinis (strain SK36).